The primary structure comprises 1091 residues: AP-3 complex subunit beta-1 (1091 aa).

Disordered stretches follow at residues 1–32 (MSGN…SPSG) and 267–290 (EDNE…KKKP). Positions 267–288 (EDNEKNFYESDDEQKEKTDQKK) are enriched in basic and acidic residues. Residues Ser-276 and Ser-609 each carry the phosphoserine modification. The segment at 664–807 (AGKAKKENPA…EKEKKTKEDR (144 aa)) is disordered. Basic and acidic residues predominate over residues 667-678 (AKKENPARKFYS). 2 stretches are compositionally biased toward acidic residues: residues 679 to 695 (DSEE…DSES) and 703 to 718 (EQDE…SEDS). A compositionally biased stretch (basic and acidic residues) spans 719 to 736 (SSEHRSDSESVSEVGDKR). Phosphoserine is present on residues Ser-748 and Ser-750. Low complexity predominate over residues 763–775 (SDSSSTDSSSVEE). A compositionally biased stretch (acidic residues) spans 776-789 (SSSDSESESESESE). Over residues 790-807 (SESKKVTMEKEKKTKEDR) the composition is skewed to basic and acidic residues.

Belongs to the adaptor complexes large subunit family. Adaptor protein complex 3 (AP-3) is a heterotetramer composed of two large adaptins (delta-type subunit AP3D1 and beta-type subunit AP3B1 or AP3B2), a medium adaptin (mu-type subunit AP3M1 or AP3M2) and a small adaptin (sigma-type subunit APS1 or AP3S2). AP-3 associates with the BLOC-1 complex. Interacts with KIF3A; interaction is direct; interaction is impaired by pyrophosphorylation of AP3B1. Phosphorylated on serine residues. In terms of processing, pyrophosphorylation by 5-diphosphoinositol pentakisphosphate (5-IP7) impairs interaction with KIF3A. Serine pyrophosphorylation is achieved by Mg(2+)-dependent, but enzyme independent transfer of a beta-phosphate from a inositol pyrophosphate to a pre-phosphorylated serine residue.

It is found in the cytoplasmic vesicle. The protein localises to the clathrin-coated vesicle membrane. Its subcellular location is the golgi apparatus. Its function is as follows. Subunit of non-clathrin- and clathrin-associated adaptor protein complex 3 (AP-3) that plays a role in protein sorting in the late-Golgi/trans-Golgi network (TGN) and/or endosomes. The AP complexes mediate both the recruitment of clathrin to membranes and the recognition of sorting signals within the cytosolic tails of transmembrane cargo molecules. AP-3 appears to be involved in the sorting of a subset of transmembrane proteins targeted to lysosomes and lysosome-related organelles. In concert with the BLOC-1 complex, AP-3 is required to target cargos into vesicles assembled at cell bodies for delivery into neurites and nerve terminals. The chain is AP-3 complex subunit beta-1 (AP3B1) from Canis lupus familiaris (Dog).